The following is a 119-amino-acid chain: Holo-[acyl-carrier-protein] synthase (119 aa).

2 residues coordinate Mg(2+): aspartate 8 and glutamate 50.

This sequence belongs to the P-Pant transferase superfamily. AcpS family. Mg(2+) serves as cofactor.

The protein resides in the cytoplasm. The enzyme catalyses apo-[ACP] + CoA = holo-[ACP] + adenosine 3',5'-bisphosphate + H(+). In terms of biological role, transfers the 4'-phosphopantetheine moiety from coenzyme A to a Ser of acyl-carrier-protein. The protein is Holo-[acyl-carrier-protein] synthase of Clavibacter sepedonicus (Clavibacter michiganensis subsp. sepedonicus).